Reading from the N-terminus, the 334-residue chain is B3 domain-containing protein LOC_Os12g40090 (334 aa).

The TF-B3 1 DNA-binding region spans 5-102 (RIRFFRLMTG…SFDVLIFDAS (98 aa)). A disordered region spans residues 142–178 (TSTPSVLIGSPHKASTSKKLSGKTKTNPRKEPEDPNC). The span at 154–166 (KASTSKKLSGKTK) shows a compositional bias: low complexity. The TF-B3 2 DNA-binding region spans 227-326 (FVVVLQTAHV…TMTVHVIGKA (100 aa)).

Its subcellular location is the nucleus. This Oryza sativa subsp. japonica (Rice) protein is B3 domain-containing protein LOC_Os12g40090.